The following is a 591-amino-acid chain: Thiamine transporter thi9 (591 aa).

The span at 1-22 (MPSSQISHQDPELGQTSSGSSS) shows a compositional bias: polar residues. The tract at residues 1 to 42 (MPSSQISHQDPELGQTSSGSSSIKEKAEPQLYAGPIDPARRP) is disordered. 5 helical membrane-spanning segments follow: residues 98 to 118 (LTFS…AMLV), 342 to 362 (IFYS…LYLF), 397 to 417 (VVMN…SVLA), 450 to 470 (ITVI…SAVA), and 545 to 565 (YAVV…IVIP). Phosphoserine is present on Ser585.

This sequence belongs to the amino acid-polyamine-organocation (APC) superfamily.

The protein resides in the endoplasmic reticulum membrane. It is found in the cell membrane. Its function is as follows. Thiamine transporter involved in the cellular uptake of thiamine. Pyrithiamine, oxythiamine, amprolium, and the thiazole part of thiamine have been shown to be also substrates of thi9. This chain is Thiamine transporter thi9 (thi9), found in Schizosaccharomyces pombe (strain 972 / ATCC 24843) (Fission yeast).